A 292-amino-acid chain; its full sequence is 4-hydroxy-tetrahydrodipicolinate synthase (292 aa).

Thr45 is a pyruvate binding site. Tyr133 (proton donor/acceptor) is an active-site residue. Lys161 functions as the Schiff-base intermediate with substrate in the catalytic mechanism. Position 203 (Ile203) interacts with pyruvate.

It belongs to the DapA family. As to quaternary structure, homotetramer; dimer of dimers.

The protein localises to the cytoplasm. It carries out the reaction L-aspartate 4-semialdehyde + pyruvate = (2S,4S)-4-hydroxy-2,3,4,5-tetrahydrodipicolinate + H2O + H(+). It functions in the pathway amino-acid biosynthesis; L-lysine biosynthesis via DAP pathway; (S)-tetrahydrodipicolinate from L-aspartate: step 3/4. Its function is as follows. Catalyzes the condensation of (S)-aspartate-beta-semialdehyde [(S)-ASA] and pyruvate to 4-hydroxy-tetrahydrodipicolinate (HTPA). This is 4-hydroxy-tetrahydrodipicolinate synthase from Vibrio cholerae serotype O1 (strain ATCC 39541 / Classical Ogawa 395 / O395).